We begin with the raw amino-acid sequence, 101 residues long: DET1- and DDB1-associated protein 1 (101 aa).

The interval 67-101 (NAAKKRDQDQLEIGETSAPPRKIARTDSQEMSEDT) is disordered.

This sequence belongs to the DDA1 family. As to quaternary structure, component of numerous DCX (DDB1-CUL4-X-box) E3 ubiquitin-protein ligase complexes which consist of a core of DDB1, cullin-4 (CUL4A or CUL4B), DDA1 and RBX1.

The protein operates within protein modification; protein ubiquitination. Functionally, functions as a component of numerous distinct DCX (DDB1-CUL4-X-box) E3 ubiquitin-protein ligase complexes which mediate the ubiquitination and subsequent proteasomal degradation of target proteins. In the DCX complexes, acts as a scaffolding subunit required to stabilize the complex. This is DET1- and DDB1-associated protein 1 from Xenopus tropicalis (Western clawed frog).